A 187-amino-acid polypeptide reads, in one-letter code: MFLLLNCIVAVSQNMGIGKNGDLPRPPLRNEFRYFQRMTTTSSVEGKQNLVIMGRKTWFSIPEKNRPLKDRINLVLSRELKEPPQGAHFLARSLDDALKLTERPELANKVDMIWIVGGSSVYKEAMNHLGHLKLFVTRIMQDFESDTFFSEIDLEKYKLLPEYPGVLSDVQEGKHIKYKFEVCEKDD.

The DHFR domain occupies 4-185 (LLNCIVAVSQ…IKYKFEVCEK (182 aa)). Residues Ala-10 and 16–22 (GIGKNGD) each bind NADP(+). 31–36 (EFRYFQ) contacts substrate. 55–57 (RKT) provides a ligand contact to NADP(+). A substrate-binding site is contributed by Arg-71. NADP(+) contacts are provided by residues 77 to 79 (SRE) and 117 to 124 (GGSSVYKE).

The protein belongs to the dihydrofolate reductase family. Expressed in numerous cell lines.

Its subcellular location is the mitochondrion. It is found in the mitochondrion matrix. The protein localises to the mitochondrion inner membrane. It catalyses the reaction (6S)-5,6,7,8-tetrahydrofolate + NADP(+) = 7,8-dihydrofolate + NADPH + H(+). It functions in the pathway cofactor biosynthesis; tetrahydrofolate biosynthesis; 5,6,7,8-tetrahydrofolate from 7,8-dihydrofolate: step 1/1. In terms of biological role, key enzyme in folate metabolism. Contributes to the de novo mitochondrial thymidylate biosynthesis pathway. Required to prevent uracil accumulation in mtDNA. Binds its own mRNA and that of DHFR. This is Dihydrofolate reductase 2, mitochondrial from Homo sapiens (Human).